The sequence spans 685 residues: E3 ubiquitin-protein ligase RNF6 (685 aa).

3 stretches are compositionally biased toward basic and acidic residues: residues Met-1–Gly-10, Pro-17–Trp-29, and Asp-88–Glu-107. Disordered regions lie at residues Met-1–Trp-29, Glu-81–Glu-107, Gly-121–Pro-142, Asp-168–Gln-273, Arg-286–Gly-345, and Glu-499–Asn-576. 3 stretches are compositionally biased toward polar residues: residues Ser-199 to Pro-213, Ala-250 to Gly-264, and Arg-286 to Arg-297. The segment covering Leu-303–Ser-313 has biased composition (low complexity). Polar residues-rich tracts occupy residues Pro-314–Asn-325 and Glu-519–Asn-528. The segment at Cys-632–Arg-673 adopts an RING-type zinc-finger fold.

Belongs to the RNF12 family. Weakly expressed in peripheral blood, spleen, prostate, testis and ovary. According to a report, it is preferentially expressed in testis and ovary and hardly detected in other tissues.

Its subcellular location is the nucleus. The protein resides in the cytoplasm. It localises to the cell projection. It is found in the axon. The protein localises to the PML body. The enzyme catalyses S-ubiquitinyl-[E2 ubiquitin-conjugating enzyme]-L-cysteine + [acceptor protein]-L-lysine = [E2 ubiquitin-conjugating enzyme]-L-cysteine + N(6)-ubiquitinyl-[acceptor protein]-L-lysine.. The protein operates within protein modification; protein ubiquitination. Functionally, E3 ubiquitin-protein ligase mediating 'Lys-48'-linked polyubiquitination of LIMK1 and its subsequent targeting to the proteasome for degradation. Negatively regulates axonal outgrowth through regulation of the LIMK1 turnover. Mediates 'Lys-6' and 'Lys-27'-linked polyubiquitination of AR/androgen receptor thereby modulating its transcriptional activity. May also bind DNA and function as a transcriptional regulator. Mediates polyubiquitination of QKI in macrophages, leading to its degradation. The chain is E3 ubiquitin-protein ligase RNF6 from Homo sapiens (Human).